The primary structure comprises 863 residues: Glycerol-3-phosphate acyltransferase (863 aa).

The tract at residues 1 to 29 (MPKKNSPLLPKETTTTQSSVDTSGSSNLT) is disordered. A compositionally biased stretch (polar residues) spans 12–29 (ETTTTQSSVDTSGSSNLT). Positions 343-348 (SHRSHM) match the HXXXXD motif motif.

This sequence belongs to the GPAT/DAPAT family.

It is found in the cell inner membrane. It catalyses the reaction sn-glycerol 3-phosphate + an acyl-CoA = a 1-acyl-sn-glycero-3-phosphate + CoA. It participates in phospholipid metabolism; CDP-diacylglycerol biosynthesis; CDP-diacylglycerol from sn-glycerol 3-phosphate: step 1/3. The protein is Glycerol-3-phosphate acyltransferase of Xylella fastidiosa (strain M23).